The sequence spans 541 residues: Chaperonin GroEL (541 aa).

ATP-binding positions include 29–32 (TLGP), 86–90 (DGTTT), G413, and D494.

The protein belongs to the chaperonin (HSP60) family. Forms a cylinder of 14 subunits composed of two heptameric rings stacked back-to-back. Interacts with the co-chaperonin GroES.

The protein resides in the cytoplasm. It carries out the reaction ATP + H2O + a folded polypeptide = ADP + phosphate + an unfolded polypeptide.. Functionally, together with its co-chaperonin GroES, plays an essential role in assisting protein folding. The GroEL-GroES system forms a nano-cage that allows encapsulation of the non-native substrate proteins and provides a physical environment optimized to promote and accelerate protein folding. This Acetivibrio thermocellus (strain ATCC 27405 / DSM 1237 / JCM 9322 / NBRC 103400 / NCIMB 10682 / NRRL B-4536 / VPI 7372) (Clostridium thermocellum) protein is Chaperonin GroEL.